Reading from the N-terminus, the 263-residue chain is Endonuclease 8 (263 aa).

The active-site Schiff-base intermediate with DNA is the P2. The active-site Proton donor is E3. The active-site Proton donor; for beta-elimination activity is K53. The DNA site is built by Q70, R125, and N169. An FPG-type zinc finger spans residues 229-263; that stretch reads KVFHRDGEACERCGGIIEKTTLSSRPFYWCPHCQK. The active-site Proton donor; for delta-elimination activity is the R253.

It belongs to the FPG family. Zn(2+) is required as a cofactor.

It catalyses the reaction 2'-deoxyribonucleotide-(2'-deoxyribose 5'-phosphate)-2'-deoxyribonucleotide-DNA = a 3'-end 2'-deoxyribonucleotide-(2,3-dehydro-2,3-deoxyribose 5'-phosphate)-DNA + a 5'-end 5'-phospho-2'-deoxyribonucleoside-DNA + H(+). In terms of biological role, involved in base excision repair of DNA damaged by oxidation or by mutagenic agents. Acts as a DNA glycosylase that recognizes and removes damaged bases. Has a preference for oxidized pyrimidines, such as thymine glycol, 5,6-dihydrouracil and 5,6-dihydrothymine. Has AP (apurinic/apyrimidinic) lyase activity and introduces nicks in the DNA strand. Cleaves the DNA backbone by beta-delta elimination to generate a single-strand break at the site of the removed base with both 3'- and 5'-phosphates. The sequence is that of Endonuclease 8 from Salmonella enteritidis PT4 (strain P125109).